Here is a 434-residue protein sequence, read N- to C-terminus: Putative ankyrin repeat protein FPV023 (434 aa).

ANK repeat units follow at residues 33–62 (RLKI…DPVA), 134–163 (LTIS…DINF), 167–197 (IGNT…DINI), 201–230 (YGTT…DPNS), 236–265 (IGTK…DPNI), 269–299 (AGVT…DPNI), and 303–330 (NGTT…DINI).

This chain is Putative ankyrin repeat protein FPV023, found in Fowlpox virus (strain NVSL) (FPV).